The sequence spans 269 residues: MNASRIAAAGASTLTRRIIPCLDVTAGRVVKGVNFVNLTDAGDPVEIARRYNEQGADELTFLDITATSDGRDLILPIIEQVASQVFIPLTVGGGVRQVSDVQRLLNAGADKISINSAAVANPELVRAAADYHGSQCIVVAIDARRSSAEGEPARWEVFTHGGRKATGLDAVAWARRMAAYGAGEILLTSMDRDGTKSGFDLELTRAVSDAVPVPVIASGGVGNLQHLADGVTTGRASAVLAASIFHFGQHTVRECKQYMAERGIAVRLT.

Catalysis depends on residues Asp-23 and Asp-142.

It belongs to the HisA/HisF family. Heterodimer of HisH and HisF.

The protein localises to the cytoplasm. It catalyses the reaction 5-[(5-phospho-1-deoxy-D-ribulos-1-ylimino)methylamino]-1-(5-phospho-beta-D-ribosyl)imidazole-4-carboxamide + L-glutamine = D-erythro-1-(imidazol-4-yl)glycerol 3-phosphate + 5-amino-1-(5-phospho-beta-D-ribosyl)imidazole-4-carboxamide + L-glutamate + H(+). The protein operates within amino-acid biosynthesis; L-histidine biosynthesis; L-histidine from 5-phospho-alpha-D-ribose 1-diphosphate: step 5/9. In terms of biological role, IGPS catalyzes the conversion of PRFAR and glutamine to IGP, AICAR and glutamate. The HisF subunit catalyzes the cyclization activity that produces IGP and AICAR from PRFAR using the ammonia provided by the HisH subunit. The protein is Imidazole glycerol phosphate synthase subunit HisF of Bordetella pertussis (strain Tohama I / ATCC BAA-589 / NCTC 13251).